The sequence spans 276 residues: ESX-2 secretion-associated protein EspG2 (276 aa).

It belongs to the EspG family. As to quaternary structure, interacts specifically with ESX-2-dependent PE/PPE proteins.

Its subcellular location is the cytoplasm. Functionally, specific chaperone for cognate PE/PPE proteins. Plays an important role in preventing aggregation of PE/PPE dimers. The polypeptide is ESX-2 secretion-associated protein EspG2 (Mycobacterium tuberculosis (strain CDC 1551 / Oshkosh)).